We begin with the raw amino-acid sequence, 157 residues long: Peptide methionine sulfoxide reductase MsrA (157 aa).

Cys-13 is a catalytic residue.

It belongs to the MsrA Met sulfoxide reductase family.

It catalyses the reaction L-methionyl-[protein] + [thioredoxin]-disulfide + H2O = L-methionyl-(S)-S-oxide-[protein] + [thioredoxin]-dithiol. The catalysed reaction is [thioredoxin]-disulfide + L-methionine + H2O = L-methionine (S)-S-oxide + [thioredoxin]-dithiol. In terms of biological role, has an important function as a repair enzyme for proteins that have been inactivated by oxidation. Catalyzes the reversible oxidation-reduction of methionine sulfoxide in proteins to methionine. The sequence is that of Peptide methionine sulfoxide reductase MsrA from Methanococcus maripaludis (strain C5 / ATCC BAA-1333).